We begin with the raw amino-acid sequence, 520 residues long: Lysine--tRNA ligase (520 aa).

Residues 1-21 (MSDHLIPSIPTPAAAPAAAPA) are disordered. The segment covering 12-21 (PAAAPAAAPA) has biased composition (low complexity). Positions 430 and 437 each coordinate Mg(2+).

The protein belongs to the class-II aminoacyl-tRNA synthetase family. As to quaternary structure, homodimer. It depends on Mg(2+) as a cofactor.

It is found in the cytoplasm. It catalyses the reaction tRNA(Lys) + L-lysine + ATP = L-lysyl-tRNA(Lys) + AMP + diphosphate. The polypeptide is Lysine--tRNA ligase (Variovorax paradoxus (strain S110)).